Consider the following 391-residue polypeptide: Small ribosomal subunit protein bS1 (391 aa).

4 consecutive S1 motif domains span residues 16–90 (GDKV…LSRR), 108–173 (NEII…LSRK), 194–262 (GDVI…LSIK), and 279–348 (NDDI…LSIK). The interval 356–381 (VVESDPSTTKAYLESEEEDNPTIGDM) is disordered.

This sequence belongs to the bacterial ribosomal protein bS1 family.

Functionally, binds mRNA; thus facilitating recognition of the initiation point. It is needed to translate mRNA with a short Shine-Dalgarno (SD) purine-rich sequence. The chain is Small ribosomal subunit protein bS1 (rpsA) from Staphylococcus aureus (strain MRSA252).